Reading from the N-terminus, the 485-residue chain is Glutamyl-tRNA(Gln) amidotransferase subunit A (485 aa).

Residues lysine 79 and serine 154 each act as charge relay system in the active site. The active-site Acyl-ester intermediate is serine 178.

It belongs to the amidase family. GatA subfamily. In terms of assembly, heterotrimer of A, B and C subunits.

The catalysed reaction is L-glutamyl-tRNA(Gln) + L-glutamine + ATP + H2O = L-glutaminyl-tRNA(Gln) + L-glutamate + ADP + phosphate + H(+). Functionally, allows the formation of correctly charged Gln-tRNA(Gln) through the transamidation of misacylated Glu-tRNA(Gln) in organisms which lack glutaminyl-tRNA synthetase. The reaction takes place in the presence of glutamine and ATP through an activated gamma-phospho-Glu-tRNA(Gln). This chain is Glutamyl-tRNA(Gln) amidotransferase subunit A, found in Bacillus licheniformis (strain ATCC 14580 / DSM 13 / JCM 2505 / CCUG 7422 / NBRC 12200 / NCIMB 9375 / NCTC 10341 / NRRL NRS-1264 / Gibson 46).